The primary structure comprises 536 residues: UDP-N-acetylmuramate--L-alanine ligase (536 aa).

ATP is bound at residue 133 to 139 (GSSGKTT).

This sequence belongs to the MurCDEF family.

Its subcellular location is the cytoplasm. It catalyses the reaction UDP-N-acetyl-alpha-D-muramate + L-alanine + ATP = UDP-N-acetyl-alpha-D-muramoyl-L-alanine + ADP + phosphate + H(+). It participates in cell wall biogenesis; peptidoglycan biosynthesis. Functionally, cell wall formation. This is UDP-N-acetylmuramate--L-alanine ligase from Wolbachia sp. subsp. Brugia malayi (strain TRS).